The following is a 398-amino-acid chain: MNIHEYQGKQVLAKYGVAVLKGGVAYTPDEAVQVAKDLGGPVWVVKSQIHAGGRGAGRFKNDPNGKGGVRVAKSVEEVKTNVDQMLGQVLITKQTGPAGKEVKRVYIEQGCDIKRELYLSMLVDRATCRVTIVASTEGGMEIEEVAHNHPEKILKVAIDPVEGFQQYHGRQIAFGLGLEGKQVNTCVKFVGALYKAFMDLDCSIVEINPLVVTGAGELIALDAKVNFDDNALFRHKDIEELRDESEEDPAELEAARHSLNYIKLDGQIGCMVNGAGLAMATMDIIKLYGAEPANFLDVGGGATKERVTTAFKLILSDPNVEGILVNIFGGIMRCDVIAEGVVAAAREVSLNVPLVVRLEGTNVELGKKIMAQSGLPIIAADNLADAAEKVVKAVKEAA.

Positions 9-253 constitute an ATP-grasp domain; it reads KQVLAKYGVA…ESEEDPAELE (245 aa). Residues Lys-46, 53–55, Glu-108, Cys-111, and Glu-116 contribute to the ATP site; that span reads GRG. Residues Asn-208 and Asp-222 each contribute to the Mg(2+) site. Substrate contacts are provided by residues Asn-273 and 330-332; that span reads GIM.

This sequence belongs to the succinate/malate CoA ligase beta subunit family. As to quaternary structure, heterotetramer of two alpha and two beta subunits. Requires Mg(2+) as cofactor.

The catalysed reaction is succinate + ATP + CoA = succinyl-CoA + ADP + phosphate. It carries out the reaction GTP + succinate + CoA = succinyl-CoA + GDP + phosphate. The protein operates within carbohydrate metabolism; tricarboxylic acid cycle; succinate from succinyl-CoA (ligase route): step 1/1. Functionally, succinyl-CoA synthetase functions in the citric acid cycle (TCA), coupling the hydrolysis of succinyl-CoA to the synthesis of either ATP or GTP and thus represents the only step of substrate-level phosphorylation in the TCA. The beta subunit provides nucleotide specificity of the enzyme and binds the substrate succinate, while the binding sites for coenzyme A and phosphate are found in the alpha subunit. This chain is Succinate--CoA ligase [ADP-forming] subunit beta, found in Paramagnetospirillum magneticum (strain ATCC 700264 / AMB-1) (Magnetospirillum magneticum).